Here is a 334-residue protein sequence, read N- to C-terminus: Glyceraldehyde-3-phosphate dehydrogenase (334 aa).

NAD(+) is bound by residues 10–11, aspartate 33, lysine 77, and threonine 119; that span reads RI. D-glyceraldehyde 3-phosphate contacts are provided by residues 149-151, threonine 180, 209-210, and arginine 232; these read SCT and TG. Cysteine 150 (nucleophile) is an active-site residue. Position 314 (asparagine 314) interacts with NAD(+).

Belongs to the glyceraldehyde-3-phosphate dehydrogenase family. In terms of assembly, homotetramer.

Its subcellular location is the cytoplasm. It catalyses the reaction D-glyceraldehyde 3-phosphate + phosphate + NAD(+) = (2R)-3-phospho-glyceroyl phosphate + NADH + H(+). The protein operates within carbohydrate degradation; glycolysis; pyruvate from D-glyceraldehyde 3-phosphate: step 1/5. Its function is as follows. Catalyzes the oxidative phosphorylation of glyceraldehyde 3-phosphate (G3P) to 1,3-bisphosphoglycerate (BPG) using the cofactor NAD. The first reaction step involves the formation of a hemiacetal intermediate between G3P and a cysteine residue, and this hemiacetal intermediate is then oxidized to a thioester, with concomitant reduction of NAD to NADH. The reduced NADH is then exchanged with the second NAD, and the thioester is attacked by a nucleophilic inorganic phosphate to produce BPG. This is Glyceraldehyde-3-phosphate dehydrogenase (gap) from Chlamydia trachomatis serovar D (strain ATCC VR-885 / DSM 19411 / UW-3/Cx).